Consider the following 138-residue polypeptide: Translation initiation factor 2 subunit beta (138 aa).

This sequence belongs to the eIF-2-beta/eIF-5 family. In terms of assembly, heterotrimer composed of an alpha, a beta and a gamma chain.

Functionally, eIF-2 functions in the early steps of protein synthesis by forming a ternary complex with GTP and initiator tRNA. This Methanococcus maripaludis (strain C5 / ATCC BAA-1333) protein is Translation initiation factor 2 subunit beta.